Consider the following 225-residue polypeptide: RNA-binding protein 24-A (225 aa).

Residues 11–88 (TKIFVGGLPY…RKANVNLAYL (78 aa)) enclose the RRM domain.

The protein localises to the nucleus. It localises to the cytoplasm. Its function is as follows. Multifunctional RNA-binding protein involved in the regulation of pre-mRNA splicing, mRNA stability and mRNA translation important for cell fate decision and differentiation. Plays a major role in pre-mRNA alternative splicing regulation. Mediates preferentially muscle-specific exon inclusion in numerous mRNAs important for striated cardiac and skeletal muscle cell differentiation. Binds to intronic splicing enhancer (ISE) composed of stretches of GU-rich motifs localized in flanking intron of exon that will be included by alternative splicing. Involved in embryonic stem cell (ESC) transition to cardiac cell differentiation by promoting pre-mRNA alternative splicing events of several pluripotency and/or differentiation genes. Plays a role in the regulation of mRNA stability and mRNA translation to which it is bound. Involved in myogenic differentiation by regulating myog levels. Binds to a huge amount of mRNAs. Required for embryonic heart development, sarcomer and M-band formation in striated muscles. The chain is RNA-binding protein 24-A (rbm24-a) from Xenopus laevis (African clawed frog).